The chain runs to 127 residues: Biogenesis of lysosome-related organelles complex 1 subunit BLS1 (127 aa).

A disordered region spans residues 103–127; it reads KNSHNTNHGGCNKTKNSSKDKLLDK. Over residues 105 to 117 the composition is skewed to polar residues; that stretch reads SHNTNHGGCNKTK.

It belongs to the BLOC1S1 family. In terms of assembly, component of the biogenesis of lysosome-related organelles complex-1 (BLOC-1).

The protein localises to the endosome. Its function is as follows. Component of the biogenesis of lysosome-related organelles complex-1 (BLOC-1), a complex involved in endosomal cargo sorting. The protein is Biogenesis of lysosome-related organelles complex 1 subunit BLS1 (BLS1) of Vanderwaltozyma polyspora (strain ATCC 22028 / DSM 70294 / BCRC 21397 / CBS 2163 / NBRC 10782 / NRRL Y-8283 / UCD 57-17) (Kluyveromyces polysporus).